A 282-amino-acid chain; its full sequence is Pantothenate synthetase (282 aa).

Residue Met-30–His-37 participates in ATP binding. His-37 (proton donor) is an active-site residue. Gln-61 contributes to the (R)-pantoate binding site. A beta-alanine-binding site is contributed by Gln-61. Gly-148 to Asp-151 contacts ATP. Gln-154 contacts (R)-pantoate. Residues Val-177 and Leu-185–Arg-188 contribute to the ATP site.

The protein belongs to the pantothenate synthetase family. As to quaternary structure, homodimer.

The protein localises to the cytoplasm. The enzyme catalyses (R)-pantoate + beta-alanine + ATP = (R)-pantothenate + AMP + diphosphate + H(+). It participates in cofactor biosynthesis; (R)-pantothenate biosynthesis; (R)-pantothenate from (R)-pantoate and beta-alanine: step 1/1. Catalyzes the condensation of pantoate with beta-alanine in an ATP-dependent reaction via a pantoyl-adenylate intermediate. This chain is Pantothenate synthetase, found in Acinetobacter baumannii (strain AB0057).